We begin with the raw amino-acid sequence, 126 residues long: Protein ApaG (126 aa).

One can recognise an ApaG domain in the interval 2-126 (SQLTSSVRVD…FRLSIPGLLH (125 aa)).

The protein is Protein ApaG of Shewanella halifaxensis (strain HAW-EB4).